The sequence spans 467 residues: UDP-glycosyltransferase 71D1 (467 aa).

The active-site Proton acceptor is His-16. His-16 is an an anthocyanidin binding site. Asp-122 acts as the Charge relay in catalysis. UDP-alpha-D-glucose-binding residues include Thr-144, Gln-341, His-356, Trp-359, Asn-360, Ser-361, and Glu-364. Ala-379 is an an anthocyanidin binding site. UDP-alpha-D-glucose is bound by residues Glu-380 and Gln-381.

Belongs to the UDP-glycosyltransferase family.

It catalyses the reaction a flavonol + UDP-alpha-D-glucose = a flavonol 3-O-beta-D-glucoside + UDP + H(+). In terms of biological role, possesses quercetin 3-O-glucosyltransferase activity in vitro. The sequence is that of UDP-glycosyltransferase 71D1 (UGT71D1) from Arabidopsis thaliana (Mouse-ear cress).